The following is a 90-amino-acid chain: Progonadoliberin-1 (90 aa).

The signal sequence occupies residues 1–21 (MILKLMAGILLLTVCLEGCSS). A Pyrrolidone carboxylic acid modification is found at Q22. A Glycine amide modification is found at G31.

This sequence belongs to the GnRH family. In terms of processing, the precursor is cleaved by ACE, which removes the Gly-Lys-Arg peptide at the C-terminus, leading to mature hormone. The mature form of Gonadoliberin-1 is also cleaved and degraded by ACE.

It localises to the secreted. In terms of biological role, stimulates the secretion of gonadotropins; it stimulates the secretion of both luteinizing and follicle-stimulating hormones. The polypeptide is Progonadoliberin-1 (Gnrh1) (Mus musculus (Mouse)).